The sequence spans 1081 residues: Teashirt homolog 3 (1081 aa).

Disordered regions lie at residues 141–161 and 238–257; these read PSSE…SSCG and HYRD…WSKP. Positions 148–161 are enriched in low complexity; it reads GSSSSSSSSSSSCG. 2 consecutive C2H2-type zinc fingers follow at residues 214–238 and 275–299; these read FRCK…ETGH and LKCM…KTKH. Over residues 238 to 247 the composition is skewed to basic and acidic residues; sequence HYRDDNHETD. Residues 325 to 364 form a disordered region; sequence SLELELPSSPDSTGGTPKATISDTNDALQKNSNPYITPNN. The span at 335–364 shows a compositional bias: polar residues; the sequence is DSTGGTPKATISDTNDALQKNSNPYITPNN. Residues 386-404 form a C2H2-type 3; atypical zinc finger; that stretch reads LKCMECGSSHDTLQELTAH. The segment covering 473 to 491 has biased composition (basic and acidic residues); it reads EVDKEKAVTDEKPKQKDKP. 4 disordered regions span residues 473-502, 579-604, 626-687, and 855-897; these read EVDK…DISS, NSEI…PMPK, EKMK…LAEP, and TESH…RQSN. Residues 581–603 are compositionally biased toward polar residues; that stretch reads EIVSPTKNQTLVSPPSSQTSPMP. The stretch at 606–630 forms a coiled coil; sequence NFHAMEELVKKVTEKVAKVEEKMKE. A Phosphoserine modification is found at S682. Residues 856–869 show a composition bias toward low complexity; sequence ESHTSKSSTPSSIS. The segment at residues 891–961 is a DNA-binding region (homeobox; atypical); the sequence is RKGRQSNWNP…NVKYQLRRTG (71 aa). 2 consecutive C2H2-type zinc fingers follow at residues 976 to 998 and 1041 to 1064; these read FFCN…LESH and YQCK…SKTH.

Belongs to the teashirt C2H2-type zinc-finger protein family. In terms of assembly, interacts (via homeobox domain) with APBB1 (via PID domain 1). Interacts (via N-terminus) with HDAC1 and HDAC2; the interaction is direct. Found in a trimeric complex with APBB1 and HDAC1; the interaction between HDAC1 and APBB1 is mediated by TSHZ3. As to expression, expressed in brain; strongly reduced in post-mortem elderly subjects with Alzheimer disease. Expressed in the fetal neocortex.

It is found in the nucleus. The protein localises to the cell projection. It localises to the growth cone. Transcriptional regulator involved in developmental processes. Functions in association with APBB1, SET and HDAC factors as a transcriptional repressor, that inhibits the expression of CASP4. TSHZ3-mediated transcription repression involves the recruitment of histone deacetylases HDAC1 and HDAC2. Associates with chromatin in a region surrounding the CASP4 transcriptional start site(s). Regulates the development of neurons involved in both respiratory rhythm and airflow control. Promotes maintenance of nucleus ambiguus (nA) motoneurons, which govern upper airway function, and establishes a respiratory rhythm generator (RRG) activity compatible with survival at birth. Involved in the differentiation of the proximal uretic smooth muscle cells during developmental processes. Involved in the up-regulation of myocardin, that directs the expression of smooth muscle cells in the proximal ureter. Involved in the modulation of glutamatergic synaptic transmission and long-term synaptic potentiation. This Homo sapiens (Human) protein is Teashirt homolog 3 (TSHZ3).